The sequence spans 471 residues: Delta(24(24(1)))-sterol reductase erg4A (471 aa).

A glycan (N-linked (GlcNAc...) asparagine) is linked at asparagine 15. The next 8 helical transmembrane spans lie at 33–53 (VTLI…GAVL), 89–109 (WTIY…LPGV), 130–150 (AVSS…TGVL), 159–179 (FGPL…VAYI), 216–236 (MFFE…GTAL), 244–264 (LVAG…NACA), 282–302 (GFML…HCTL), and 313–333 (HWNP…YWVW). NADP(+) is bound by residues lysine 340, arginine 344, leucine 380, and 392–393 (HY). Residues 397-417 (VFFAISWGLITGFNSPFPWFY) form a helical membrane-spanning segment. NADP(+) contacts are provided by residues aspartate 432, 436–440 (CRERY), and tyrosine 447.

It belongs to the ERG4/ERG24 family.

Its subcellular location is the endoplasmic reticulum membrane. It carries out the reaction ergosterol + NADP(+) = ergosta-5,7,22,24(28)-tetraen-3beta-ol + NADPH + H(+). It participates in steroid metabolism; ergosterol biosynthesis. In terms of biological role, delta(24(24(1)))-sterol reductase; part of the third module of ergosterol biosynthesis pathway that includes the late steps of the pathway. Catalyzes the last step of ergosterol biosynthesis by converting ergosta-5,7,22,24(28)-tetraen-3beta-ol into ergosterol. The third module or late pathway involves the ergosterol synthesis itself through consecutive reactions that mainly occur in the endoplasmic reticulum (ER) membrane. Firstly, the squalene synthase erg9 catalyzes the condensation of 2 farnesyl pyrophosphate moieties to form squalene, which is the precursor of all steroids. Squalene synthase is crucial for balancing the incorporation of farnesyl diphosphate (FPP) into sterol and nonsterol isoprene synthesis. Secondly, squalene is converted into lanosterol by the consecutive action of the squalene epoxidase erg1 and the lanosterol synthase erg7. Then, the delta(24)-sterol C-methyltransferase erg6 methylates lanosterol at C-24 to produce eburicol. Eburicol is the substrate of the sterol 14-alpha demethylase encoded by cyp51A and cyp51B, to yield 4,4,24-trimethyl ergosta-8,14,24(28)-trienol. The C-14 reductase erg24 then reduces the C14=C15 double bond which leads to 4,4-dimethylfecosterol. A sequence of further demethylations at C-4, involving the C-4 demethylation complex containing the C-4 methylsterol oxidases erg25A or erg25B, the sterol-4-alpha-carboxylate 3-dehydrogenase erg26 and the 3-keto-steroid reductase erg27, leads to the production of fecosterol via 4-methylfecosterol. The C-8 sterol isomerase erg2 then catalyzes the reaction which results in unsaturation at C-7 in the B ring of sterols and thus converts fecosterol to episterol. The sterol-C5-desaturase erg3B then catalyzes the introduction of a C-5 double bond in the B ring to produce 5-dehydroepisterol. The 2 other sterol-C5-desaturases, erg3A and erg3C, seem to be less important in ergosterol biosynthesis. The C-22 sterol desaturase erg5 further converts 5-dehydroepisterol into ergosta-5,7,22,24(28)-tetraen-3beta-ol by forming the C-22(23) double bond in the sterol side chain. Finally, ergosta-5,7,22,24(28)-tetraen-3beta-ol is substrate of the C-24(28) sterol reductases erg4A and erg4B to produce ergosterol. Possible alternative sterol biosynthetic pathways might exist from fecosterol to ergosterol, depending on the activities of the erg3 isoforms. This Aspergillus fumigatus (strain ATCC MYA-4609 / CBS 101355 / FGSC A1100 / Af293) (Neosartorya fumigata) protein is Delta(24(24(1)))-sterol reductase erg4A.